The primary structure comprises 194 residues: MSNVLVLKSSISGNNSQTNQLADYVIEKLQGNNIVVRDLSQQPLPYFDTAAAIAVRGEPKTTEEKQLLALSDKLIEELKNAQTLIIGAPMYNLNVPTQLKSYFDFIARPRVTFQYTANGSEGLLKGKKAIVLCAFGGLYDEENLVTQYMKSILGFIGITDVQFVYAQGIGFGPEAIEKAQASAKNKINEIVAAL.

FMN-binding positions include Ser-10 and 90 to 93 (MYNL).

This sequence belongs to the azoreductase type 1 family. In terms of assembly, homodimer. It depends on FMN as a cofactor.

The catalysed reaction is 2 a quinone + NADH + H(+) = 2 a 1,4-benzosemiquinone + NAD(+). It carries out the reaction N,N-dimethyl-1,4-phenylenediamine + anthranilate + 2 NAD(+) = 2-(4-dimethylaminophenyl)diazenylbenzoate + 2 NADH + 2 H(+). Functionally, quinone reductase that provides resistance to thiol-specific stress caused by electrophilic quinones. Also exhibits azoreductase activity. Catalyzes the reductive cleavage of the azo bond in aromatic azo compounds to the corresponding amines. The protein is FMN-dependent NADH:quinone oxidoreductase of Haemophilus influenzae (strain 86-028NP).